Here is a 286-residue protein sequence, read N- to C-terminus: Beta-lactamase SHV-1 (286 aa).

An N-terminal signal peptide occupies residues 1–21; it reads MRYIRLCIISLLATLPLAVHA. Ser66 serves as the catalytic Acyl-ester intermediate. Residues Cys73 and Cys119 are joined by a disulfide bond. Catalysis depends on Glu164, which acts as the Proton acceptor. 230-232 is a binding site for substrate; it reads KTG.

It belongs to the class-A beta-lactamase family.

It catalyses the reaction a beta-lactam + H2O = a substituted beta-amino acid. The sequence is that of Beta-lactamase SHV-1 (bla) from Escherichia coli.